Consider the following 218-residue polypeptide: Peptide methionine sulfoxide reductase MsrA (218 aa).

The active site involves cysteine 57.

This sequence belongs to the MsrA Met sulfoxide reductase family.

It catalyses the reaction L-methionyl-[protein] + [thioredoxin]-disulfide + H2O = L-methionyl-(S)-S-oxide-[protein] + [thioredoxin]-dithiol. The catalysed reaction is [thioredoxin]-disulfide + L-methionine + H2O = L-methionine (S)-S-oxide + [thioredoxin]-dithiol. Has an important function as a repair enzyme for proteins that have been inactivated by oxidation. Catalyzes the reversible oxidation-reduction of methionine sulfoxide in proteins to methionine. The protein is Peptide methionine sulfoxide reductase MsrA of Brucella abortus (strain S19).